A 512-amino-acid polypeptide reads, in one-letter code: Glutamyl-tRNA(Gln) amidotransferase subunit A (512 aa).

Residues lysine 82 and serine 157 each act as charge relay system in the active site. Catalysis depends on serine 181, which acts as the Acyl-ester intermediate.

This sequence belongs to the amidase family. GatA subfamily. In terms of assembly, heterotrimer of A, B and C subunits.

The catalysed reaction is L-glutamyl-tRNA(Gln) + L-glutamine + ATP + H2O = L-glutaminyl-tRNA(Gln) + L-glutamate + ADP + phosphate + H(+). Functionally, allows the formation of correctly charged Gln-tRNA(Gln) through the transamidation of misacylated Glu-tRNA(Gln) in organisms which lack glutaminyl-tRNA synthetase. The reaction takes place in the presence of glutamine and ATP through an activated gamma-phospho-Glu-tRNA(Gln). This Bordetella bronchiseptica (strain ATCC BAA-588 / NCTC 13252 / RB50) (Alcaligenes bronchisepticus) protein is Glutamyl-tRNA(Gln) amidotransferase subunit A.